The following is a 529-amino-acid chain: E3 ubiquitin-protein ligase arih1 (529 aa).

Disordered stretches follow at residues 1–30 (MDSD…EDDL) and 49–68 (GICG…GEEE). Residues 51-64 (CGEGGGSALGPGPG) show a composition bias toward gly residues. Residues 77-125 (TAEQILQHMVECIREVNEVIQNPATITRILLSHFNWDKEKLMERYFDGN) form a UBA-like region. The interval 154 to 365 (QDMPCQICYL…SAWYNCNRYN (212 aa)) is TRIAD supradomain. 18 residues coordinate Zn(2+): Cys158, Cys161, Cys175, His177, Cys180, Cys183, Cys203, Cys208, Cys248, Cys253, Cys269, Cys271, Cys276, Cys279, His284, Cys289, Cys316, and Cys319. Residues 158 to 208 (CQICYLNYPNSYFTGLECGHKFCMQCWSEYLTTKIIEEGMGQTISCPAHGC) form an RING-type 1 zinc finger. The IBR-type zinc-finger motif lies at 228-289 (LKYQHLITNS…GENWHDPVKC (62 aa)). An RING-type 2; atypical zinc finger spans residues 316-347 (CPKCHVTIEKDGGCNHMVCRNQNCKAEFCWVC). Residue Cys329 is part of the active site. The Zn(2+) site is built by Cys334, Cys339, Cys344, Cys347, His354, and Cys361. Positions 380–529 (RAALQRYLFY…EKDLWEYIED (150 aa)) are ariadne domain.

This sequence belongs to the RBR family. Ariadne subfamily. In terms of assembly, interacts (via the first RING-type zinc finger) with ube2l3. Associates with cullin-RING ubiquitin ligase (CRL) complexes containing neddylated cullin.

Its subcellular location is the cytoplasm. The protein localises to the nucleus. It carries out the reaction [E2 ubiquitin-conjugating enzyme]-S-ubiquitinyl-L-cysteine + [acceptor protein]-L-lysine = [E2 ubiquitin-conjugating enzyme]-L-cysteine + [acceptor protein]-N(6)-ubiquitinyl-L-lysine.. The protein operates within protein modification; protein ubiquitination. Autoinhibited by the ariadne domain, which masks the second RING-type zinc finger that contains the active site and inhibits the E3 activity. Inhibition is relieved upon binding to neddylated cullin-RING ubiquitin ligase complexes, which activate the E3 ligase activity of ARIH1. E3 ubiquitin-protein ligase, which catalyzes ubiquitination of target proteins together with ubiquitin-conjugating enzyme E2 ube2l3. Acts as an atypical E3 ubiquitin-protein ligase by working together with cullin-RING ubiquitin ligase (CRL) complexes and initiating ubiquitination of CRL substrates: associates with CRL complexes and specifically mediates addition of the first ubiquitin on CRLs targets. The initial ubiquitin is then elongated. E3 ubiquitin-protein ligase activity is activated upon binding to neddylated cullin-RING ubiquitin ligase complexes. This chain is E3 ubiquitin-protein ligase arih1 (arih1), found in Xenopus tropicalis (Western clawed frog).